Here is a 398-residue protein sequence, read N- to C-terminus: Acetate kinase (398 aa).

Position 9 (Asn-9) interacts with Mg(2+). Lys-16 contributes to the ATP binding site. Arg-93 serves as a coordination point for substrate. Asp-150 functions as the Proton donor/acceptor in the catalytic mechanism. ATP is bound by residues 209–213 (HLGAG), 284–286 (DMR), and 329–333 (GIGEH). Glu-382 contacts Mg(2+).

The protein belongs to the acetokinase family. Homodimer. Mg(2+) serves as cofactor. Mn(2+) is required as a cofactor.

It localises to the cytoplasm. The enzyme catalyses acetate + ATP = acetyl phosphate + ADP. The protein operates within metabolic intermediate biosynthesis; acetyl-CoA biosynthesis; acetyl-CoA from acetate: step 1/2. Catalyzes the formation of acetyl phosphate from acetate and ATP. Can also catalyze the reverse reaction. The chain is Acetate kinase from Rhodopseudomonas palustris (strain ATCC BAA-98 / CGA009).